Consider the following 413-residue polypeptide: Inactive serine protease 35 (413 aa).

A signal peptide spans 1 to 16 (MENMLLWLIFFTPGWT). N-linked (GlcNAc...) asparagine glycosylation is present at Asn-90. The region spanning 124-408 (VYGTDSRFSI…ICLWIHGNDA (285 aa)) is the Peptidase S1 domain. The cysteines at positions 154 and 170 are disulfide-linked. The segment covering 191–207 (MRNKSGGKKRRGSKRSR) has biased composition (basic residues). The disordered stretch occupies residues 191–250 (MRNKSGGKKRRGSKRSRREASGGDQREGTREHLRERAKGGRRRKKSGRGQRIAEGRPSFQ). The span at 208–228 (REASGGDQREGTREHLRERAK) shows a compositional bias: basic and acidic residues. A compositionally biased stretch (basic residues) spans 229–238 (GGRRRKKSGR).

The protein belongs to the peptidase S1 family.

Its subcellular location is the secreted. This is Inactive serine protease 35 (PRSS35) from Homo sapiens (Human).